We begin with the raw amino-acid sequence, 434 residues long: Glutamyl-tRNA reductase (434 aa).

Residues 49–52 (TCNR), Ser109, 114–116 (EPQ), and Gln120 each bind substrate. The Nucleophile role is filled by Cys50. 189 to 194 (GAGEMC) is an NADP(+) binding site.

It belongs to the glutamyl-tRNA reductase family. Homodimer.

The enzyme catalyses (S)-4-amino-5-oxopentanoate + tRNA(Glu) + NADP(+) = L-glutamyl-tRNA(Glu) + NADPH + H(+). The protein operates within porphyrin-containing compound metabolism; protoporphyrin-IX biosynthesis; 5-aminolevulinate from L-glutamyl-tRNA(Glu): step 1/2. Functionally, catalyzes the NADPH-dependent reduction of glutamyl-tRNA(Glu) to glutamate 1-semialdehyde (GSA). This Trichlorobacter lovleyi (strain ATCC BAA-1151 / DSM 17278 / SZ) (Geobacter lovleyi) protein is Glutamyl-tRNA reductase.